Consider the following 854-residue polypeptide: Fibroblast growth factor receptor 1 (854 aa).

The first 20 residues, 1–20 (MSGLFFLLSELLILLGKINS), serve as a signal peptide directing secretion. Over 21–383 (VSKKSLCHPE…NFFMNSVPLS (363 aa)) the chain is Extracellular. The 92-residue stretch at 29–120 (PELFKIDNKL…SSVFFLINVT (92 aa)) folds into the Ig-like C2-type 1 domain. Cysteine 50 and cysteine 102 are oxidised to a cystine. Asparagine 95, asparagine 99, asparagine 110, asparagine 118, asparagine 140, asparagine 175, asparagine 202, asparagine 248, asparagine 283, asparagine 317, and asparagine 346 each carry an N-linked (GlcNAc...) asparagine glycan. Ig-like C2-type domains lie at 147–259 (PEMG…FTFT) and 268–369 (PHLT…LSVI). The cysteines at positions 166 and 242 are disulfide-linked. The cysteines at positions 288 and 353 are disulfide-linked. A helical membrane pass occupies residues 384 to 404 (IFLVIGFFVAIILLSLIIYCF). Over 405-854 (FLQYKNAVDS…SDYLEPKCLV (450 aa)) the chain is Cytoplasmic. Residues 551-822 (KITNKKLGEG…EIVEILIDII (272 aa)) enclose the Protein kinase domain. Residues 557–565 (LGEGAFGMV) and lysine 585 contribute to the ATP site. The Proton acceptor role is filled by aspartate 689. Tyrosine 718 bears the Phosphotyrosine; by autocatalysis mark.

The protein belongs to the protein kinase superfamily. Tyr protein kinase family. Fibroblast growth factor receptor subfamily. Expressed in brain, stem cells and the mesenchymal cells.

The protein resides in the membrane. It carries out the reaction L-tyrosyl-[protein] + ATP = O-phospho-L-tyrosyl-[protein] + ADP + H(+). Receptor for basic fibroblast growth factor. This chain is Fibroblast growth factor receptor 1 (FGFR1), found in Dugesia japonica (Planarian).